We begin with the raw amino-acid sequence, 89 residues long: Small ribosomal subunit protein uS17 (89 aa).

It belongs to the universal ribosomal protein uS17 family. As to quaternary structure, part of the 30S ribosomal subunit.

One of the primary rRNA binding proteins, it binds specifically to the 5'-end of 16S ribosomal RNA. The sequence is that of Small ribosomal subunit protein uS17 from Leptospira borgpetersenii serovar Hardjo-bovis (strain JB197).